A 757-amino-acid chain; its full sequence is Mitofusin-2 (757 aa).

Topologically, residues 1 to 604 (MSLLFSRCNS…TQEELMVSMV (604 aa)) are cytoplasmic. Positions 30–94 (KHFVTAKKKI…VRGISEVLAR (65 aa)) are part of a helix bundle domain, formed by helices from N-terminal and C-terminal regions. The 250-residue stretch at 93–342 (ARRHMKVAFF…VRMFEFQNFE (250 aa)) folds into the Dynamin-type G domain. Positions 103-110 (GRTSNGKS) are G1 motif. 106–111 (SNGKST) contacts GTP. Thr111 carries the post-translational modification Phosphothreonine; by PINK1. The tract at residues 129 to 130 (TT) is G2 motif. A G3 motif region spans residues 199–202 (DSPG). Position 258 to 261 (258 to 261 (NRWD)) interacts with GTP. The tract at residues 258-261 (NRWD) is G4 motif. Glu288 is a region of interest (G5 motif). GTP contacts are provided by Ser305 and Lys307. The tract at residues 359–385 (EQHTVRAKQIAEAVRLIMDSLHIAAQE) is part of a helix bundle domain, formed by helices from N-terminal and C-terminal regions. A coiled-coil region spans residues 406–435 (KQLELLAQDYKLRIKQMTEEVERQVSTAMA). Position 442 is a phosphoserine; by PINK1 (Ser442). A helical membrane pass occupies residues 605-625 (TGLASLTSRTSMGILVVGGVV). Trp626 is a topological domain (mitochondrial intermembrane). The chain crosses the membrane as a helical span at residues 627-647 (KAVGWRLIALSFGLYGLLYVY). Residues 648 to 757 (ERLTWTTRAK…FIHQYLQPSR (110 aa)) lie on the Cytoplasmic side of the membrane. A coiled-coil region spans residues 696 to 738 (FAHLCQQVDITRDNLEQEIAAMNKKVEALDSLQSKAKLLRNKA). The part of a helix bundle domain, formed by helices from N-terminal and C-terminal regions stretch occupies residues 722–753 (EALDSLQSKAKLLRNKAGWLDSELNMFIHQYL).

It belongs to the TRAFAC class dynamin-like GTPase superfamily. Dynamin/Fzo/YdjA family. Mitofusin subfamily. Forms homomultimers and heteromultimers with MFN1. Oligomerization is essential for mitochondrion fusion. Interacts with VAT1. Interacts with STOML2; may form heterooligomers. Interacts (phosphorylated) with PRKN. Interacts with EIF2AK3. Interacts with THG1L; THG1L probably functions as a guanyl-nucleotide exchange factor/GEF, activating MFN2. Post-translationally, phosphorylated by PINK1. In terms of processing, ubiquitinated by non-degradative ubiquitin by PRKN, promoting mitochondrial fusion; deubiquitination by USP30 inhibits mitochondrial fusion. Ubiquitinated by HUWE1 when dietary stearate (C18:0) levels are low; ubiquitination inhibits mitochondrial fusion. As to expression, ubiquitous. In brain, it is more expressed than MFN1, while it is expressed at a weaker level than MFN1 in heart and testis. Expressed at high level in elongating spermatids of seminiferous tubules. Expression is markedly down-regulated in highly proliferative vascular smooth muscle cells (VSMCs) from the genetic hypertensive animal model SHR, as well as in balloon-injured Wistar Kyoto arteries.

It is found in the mitochondrion outer membrane. The enzyme catalyses GTP + H2O = GDP + phosphate + H(+). Mitochondrial outer membrane GTPase that mediates mitochondrial clustering and fusion. Mitochondria are highly dynamic organelles, and their morphology is determined by the equilibrium between mitochondrial fusion and fission events. Overexpression induces the formation of mitochondrial networks. Membrane clustering requires GTPase activity and may involve a major rearrangement of the coiled coil domains. Plays a central role in mitochondrial metabolism and may be associated with obesity and/or apoptosis processes. Plays an important role in the regulation of vascular smooth muscle cell proliferation. Involved in the clearance of damaged mitochondria via selective autophagy (mitophagy). Is required for PRKN recruitment to dysfunctional mitochondria. Involved in the control of unfolded protein response (UPR) upon ER stress including activation of apoptosis and autophagy during ER stress. Acts as an upstream regulator of EIF2AK3 and suppresses EIF2AK3 activation under basal conditions. The chain is Mitofusin-2 (Mfn2) from Rattus norvegicus (Rat).